Consider the following 414-residue polypeptide: Tyrosine--tRNA ligase (414 aa).

Y40 lines the L-tyrosine pocket. The short motif at 45–54 (ATAASLHVGH) is the 'HIGH' region element. The L-tyrosine site is built by Y175 and Q179. A 'KMSKS' region motif is present at residues 235 to 239 (KMGKS). ATP is bound at residue K238. The 66-residue stretch at 349-414 (LTVVQLLAQT…KKKHRMVQLG (66 aa)) folds into the S4 RNA-binding domain.

This sequence belongs to the class-I aminoacyl-tRNA synthetase family. TyrS type 1 subfamily. Homodimer.

Its subcellular location is the cytoplasm. It carries out the reaction tRNA(Tyr) + L-tyrosine + ATP = L-tyrosyl-tRNA(Tyr) + AMP + diphosphate + H(+). In terms of biological role, catalyzes the attachment of tyrosine to tRNA(Tyr) in a two-step reaction: tyrosine is first activated by ATP to form Tyr-AMP and then transferred to the acceptor end of tRNA(Tyr). The chain is Tyrosine--tRNA ligase from Paracoccus denitrificans (strain Pd 1222).